We begin with the raw amino-acid sequence, 431 residues long: Glucose-1-phosphate adenylyltransferase (431 aa).

K39 contacts beta-D-fructose 1,6-bisphosphate. Residues R40, H46, and R52 each contribute to the AMP site. Residue Y114 participates in alpha-D-glucose 1-phosphate binding. R130 serves as a coordination point for AMP. Alpha-D-glucose 1-phosphate-binding positions include G179, 194–195 (EK), and S212. AMP is bound at residue R386. 429–431 (QER) serves as a coordination point for beta-D-fructose 1,6-bisphosphate.

The protein belongs to the bacterial/plant glucose-1-phosphate adenylyltransferase family. In terms of assembly, homotetramer.

It catalyses the reaction alpha-D-glucose 1-phosphate + ATP + H(+) = ADP-alpha-D-glucose + diphosphate. Its pathway is glycan biosynthesis; glycogen biosynthesis. Its activity is regulated as follows. Allosterically activated by fructose-1,6-bisphosphate (F16BP) and inhibited by AMP. Functionally, involved in the biosynthesis of ADP-glucose, a building block required for the elongation reactions to produce glycogen. Catalyzes the reaction between ATP and alpha-D-glucose 1-phosphate (G1P) to produce pyrophosphate and ADP-Glc. This Klebsiella pneumoniae (strain 342) protein is Glucose-1-phosphate adenylyltransferase.